The sequence spans 115 residues: NADH-ubiquinone oxidoreductase chain 3 (115 aa).

Helical transmembrane passes span 3-23 (LMLT…IAFW), 55-75 (FFLV…LLPL), and 87-107 (VLFM…YEWI).

Belongs to the complex I subunit 3 family. Core subunit of respiratory chain NADH dehydrogenase (Complex I) which is composed of 45 different subunits. Interacts with TMEM186. Interacts with TMEM242.

Its subcellular location is the mitochondrion inner membrane. The catalysed reaction is a ubiquinone + NADH + 5 H(+)(in) = a ubiquinol + NAD(+) + 4 H(+)(out). Functionally, core subunit of the mitochondrial membrane respiratory chain NADH dehydrogenase (Complex I) which catalyzes electron transfer from NADH through the respiratory chain, using ubiquinone as an electron acceptor. Essential for the catalytic activity of complex I. The protein is NADH-ubiquinone oxidoreductase chain 3 of Dugong dugon (Dugong).